The following is a 278-amino-acid chain: tRNA (guanine-N(7)-)-methyltransferase (278 aa).

The interval 1-42 (MRHDGPMHVQPGVGLQSDTSSSTGTGSGPADEPEAEKSAWGY) is disordered. Residues Glu-106, Glu-131, Asn-160, and Asp-183 each contribute to the S-adenosyl-L-methionine site. Asp-183 is a catalytic residue. Residues Lys-187, Asp-219, and 256–259 (TKYE) each bind substrate.

This sequence belongs to the class I-like SAM-binding methyltransferase superfamily. TrmB family.

It catalyses the reaction guanosine(46) in tRNA + S-adenosyl-L-methionine = N(7)-methylguanosine(46) in tRNA + S-adenosyl-L-homocysteine. It participates in tRNA modification; N(7)-methylguanine-tRNA biosynthesis. Catalyzes the formation of N(7)-methylguanine at position 46 (m7G46) in tRNA. In Mycobacterium ulcerans (strain Agy99), this protein is tRNA (guanine-N(7)-)-methyltransferase.